Consider the following 339-residue polypeptide: 3-isopropylmalate dehydrogenase (339 aa).

Substrate-binding residues include arginine 88, arginine 98, arginine 122, and aspartate 212. Residues aspartate 212, aspartate 236, and aspartate 240 each contribute to the Mg(2+) site. 272-284 (GSAPDIAGKGIAD) contributes to the NAD(+) binding site.

The protein belongs to the isocitrate and isopropylmalate dehydrogenases family. LeuB type 2 subfamily. Homodimer. Mg(2+) serves as cofactor. It depends on Mn(2+) as a cofactor.

Its subcellular location is the cytoplasm. It catalyses the reaction (2R,3S)-3-isopropylmalate + NAD(+) = 4-methyl-2-oxopentanoate + CO2 + NADH. It functions in the pathway amino-acid biosynthesis; L-leucine biosynthesis; L-leucine from 3-methyl-2-oxobutanoate: step 3/4. In terms of biological role, catalyzes the oxidation of 3-carboxy-2-hydroxy-4-methylpentanoate (3-isopropylmalate) to 3-carboxy-4-methyl-2-oxopentanoate. The product decarboxylates to 4-methyl-2 oxopentanoate. The chain is 3-isopropylmalate dehydrogenase from Corynebacterium aurimucosum (strain ATCC 700975 / DSM 44827 / CIP 107346 / CN-1) (Corynebacterium nigricans).